Here is a 125-residue protein sequence, read N- to C-terminus: Small ribosomal subunit protein eS8 (125 aa).

Basic residues predominate over residues 1–23; the sequence is MQFQGRSRRKYTGAKLKSARGKR. The segment at 1 to 34 is disordered; that stretch reads MQFQGRSRRKYTGAKLKSARGKRKFELGREPAAT.

Belongs to the eukaryotic ribosomal protein eS8 family. As to quaternary structure, part of the 30S ribosomal subunit.

The protein is Small ribosomal subunit protein eS8 of Methanococcoides burtonii (strain DSM 6242 / NBRC 107633 / OCM 468 / ACE-M).